Here is a 168-residue protein sequence, read N- to C-terminus: G/U mismatch-specific DNA glycosylase (168 aa).

Belongs to the uracil-DNA glycosylase (UDG) superfamily. TDG/mug family. As to quaternary structure, binds DNA as a monomer.

It localises to the cytoplasm. The catalysed reaction is Specifically hydrolyzes mismatched double-stranded DNA and polynucleotides, releasing free uracil.. In terms of biological role, excises ethenocytosine and uracil, which can arise by alkylation or deamination of cytosine, respectively, from the corresponding mispairs with guanine in ds-DNA. It is capable of hydrolyzing the carbon-nitrogen bond between the sugar-phosphate backbone of the DNA and the mispaired base. The complementary strand guanine functions in substrate recognition. Required for DNA damage lesion repair in stationary-phase cells. The protein is G/U mismatch-specific DNA glycosylase of Klebsiella pneumoniae (strain 342).